The chain runs to 130 residues: Small ribosomal subunit protein uS9 (130 aa).

The protein belongs to the universal ribosomal protein uS9 family.

This chain is Small ribosomal subunit protein uS9, found in Aromatoleum aromaticum (strain DSM 19018 / LMG 30748 / EbN1) (Azoarcus sp. (strain EbN1)).